Here is a 1047-residue protein sequence, read N- to C-terminus: Carbamoyl phosphate synthase arginine-specific large chain (1047 aa).

A carboxyphosphate synthetic domain region spans residues 1–401 (MPKRTDIQSV…GLQKAVRSLE (401 aa)). Arg129, Arg169, Gly175, Gly176, Lys208, Ile210, Glu215, Gly241, Val242, His243, Gln284, and Glu298 together coordinate ATP. The ATP-grasp 1 domain maps to 133–327 (RQLMHELHEP…IARMAAKLSL (195 aa)). Residues Gln284, Glu298, and Asn300 each contribute to the Mg(2+) site. Positions 284, 298, and 300 each coordinate Mn(2+). An oligomerization domain region spans residues 402–549 (IKTHGLSLPS…YSSWTGENDL (148 aa)). A carbamoyl phosphate synthetic domain region spans residues 550–933 (LLPEKAKERV…AFRKAFAWGE (384 aa)). One can recognise an ATP-grasp 2 domain in the interval 676-865 (YEFMRSVEVP…LITYTIDVLF (190 aa)). Arg712, Ala750, Glu756, Gly781, Val782, His783, Ser784, Gln824, and Glu836 together coordinate ATP. The Mg(2+) site is built by Gln824, Glu836, and Asn838. Positions 824, 836, and 838 each coordinate Mn(2+). An allosteric domain region spans residues 934–1047 (EQTPALFRKK…PFLLPDVVMN (114 aa)). One can recognise an MGS-like domain in the interval 937-1047 (PALFRKKGSV…PFLLPDVVMN (111 aa)).

It belongs to the CarB family. In terms of assembly, composed of two chains; the small (or glutamine) chain promotes the hydrolysis of glutamine to ammonia, which is used by the large (or ammonia) chain to synthesize carbamoyl phosphate. Tetramer of heterodimers (alpha,beta)4. Mg(2+) serves as cofactor. It depends on Mn(2+) as a cofactor.

The catalysed reaction is hydrogencarbonate + L-glutamine + 2 ATP + H2O = carbamoyl phosphate + L-glutamate + 2 ADP + phosphate + 2 H(+). The enzyme catalyses hydrogencarbonate + NH4(+) + 2 ATP = carbamoyl phosphate + 2 ADP + phosphate + 2 H(+). It functions in the pathway amino-acid biosynthesis; L-arginine biosynthesis; carbamoyl phosphate from bicarbonate: step 1/1. Its function is as follows. Large subunit of the glutamine-dependent carbamoyl phosphate synthetase (CPSase). CPSase catalyzes the formation of carbamoyl phosphate from the ammonia moiety of glutamine, carbonate, and phosphate donated by ATP, constituting the first step of the biosynthetic pathway leading to arginine and/or urea. The large subunit (synthetase) binds the substrates ammonia (free or transferred from glutamine from the small subunit), hydrogencarbonate and ATP and carries out an ATP-coupled ligase reaction, activating hydrogencarbonate by forming carboxy phosphate which reacts with ammonia to form carbamoyl phosphate. This chain is Carbamoyl phosphate synthase arginine-specific large chain, found in Halalkalibacterium halodurans (strain ATCC BAA-125 / DSM 18197 / FERM 7344 / JCM 9153 / C-125) (Bacillus halodurans).